Here is an 814-residue protein sequence, read N- to C-terminus: Protein ADP-ribosyltransferase PARP3 (814 aa).

Composition is skewed to basic and acidic residues over residues 1 to 19 (MKVHETRSHAHMSGDEQKG) and 27 to 48 (EGKLPESEQSQKKAKPENDDGR). The interval 1 to 52 (MKVHETRSHAHMSGDEQKGNLRKHKAEGKLPESEQSQKKAKPENDDGRSVNG) is disordered. Residues 38-186 (KKAKPENDDG…KRELGSADKP (149 aa)) enclose the PADR1 zinc-binding domain. Residues 105-150 (GALAKCPLCGGTLICDNEKRFVCGGEISEWCSCVFSTKDPPRKEEP) are zinc ribbon. 4 residues coordinate Zn(2+): C110, C113, C127, and C137. TPR repeat units lie at residues 182–215 (SADKPFVGMMISLMGRLTRTHQYWKKKIERNGGK) and 277–310 (DLSVEGKGIPWDKQDPSEEAIESFSAELKMYGKR). Residues 187 to 274 (FVGMMISLMG…EAQPLEAYDV (88 aa)) form the BRCT domain. The WGR domain maps to 322 to 422 (GGKIFEKDGL…KKIQKKPHKF (101 aa)). The PARP alpha-helical domain maps to 449–568 (HCKLDSFVAN…DINTASRLIG (120 aa)). The region spanning 577-808 (DPLSDRYKKL…VKYEEKGTEI (232 aa)) is the PARP catalytic domain.

This sequence belongs to the ARTD/PARP family.

It localises to the nucleus. It carries out the reaction L-aspartyl-[protein] + NAD(+) = 4-O-(ADP-D-ribosyl)-L-aspartyl-[protein] + nicotinamide. The enzyme catalyses L-glutamyl-[protein] + NAD(+) = 5-O-(ADP-D-ribosyl)-L-glutamyl-[protein] + nicotinamide. Involved in the base excision repair (BER) pathway, by catalyzing the poly(ADP-ribosyl)ation of a limited number of acceptor proteins involved in chromatin architecture and in DNA metabolism. This modification follows DNA damages and appears as an obligatory step in a detection/signaling pathway leading to the reparation of DNA strand breaks. The sequence is that of Protein ADP-ribosyltransferase PARP3 (PARP3) from Arabidopsis thaliana (Mouse-ear cress).